An 841-amino-acid polypeptide reads, in one-letter code: Beta-adaptin-like protein A (841 aa).

2 disordered regions span residues M1–L25 and D650–S671. Composition is skewed to polar residues over residues R9 to L25 and G654 to S671.

It belongs to the adaptor complexes large subunit family. In terms of assembly, adaptor protein complexes are heterotetramers composed of two large adaptins (beta-type subunit and alpha-type or delta-type or epsilon-type or gamma-type subunit), a medium adaptin (mu-type subunit) and a small adaptin (sigma-type subunit). Interacts with AHK2.

Its subcellular location is the golgi apparatus. The protein localises to the trans-Golgi network. The protein resides in the cytoplasmic vesicle. It localises to the clathrin-coated vesicle membrane. Its function is as follows. Subunit of clathrin-associated adaptor protein complex that plays a role in protein sorting in the late-Golgi/trans-Golgi network (TGN) and/or endosomes. The AP complexes mediate both the recruitment of clathrin to membranes and the recognition of sorting signals within the cytosolic tails of transmembrane cargo molecules. The polypeptide is Beta-adaptin-like protein A (BETAA-AD) (Arabidopsis thaliana (Mouse-ear cress)).